We begin with the raw amino-acid sequence, 200 residues long: MRLSGNGLRCVRGGREVFSGLDVAAESGHAVAITGPNGAGKTSLLRLLAGLLAIADGSISLEGGDPELTLPEQAHYLGHRDALKPALTVSENLSFWRDFLGGGKSGESDALAAVGLDHVAHLPAAYLSAGQRRRLSIARLLAVKRPVWLLDEPTSALDVTGQAAFAAIMTGHLAGGGIILAATHTPLGIAARELRIGGAA.

The region spanning 1-200 is the ABC transporter domain; that stretch reads MRLSGNGLRC…ARELRIGGAA (200 aa). Position 35 to 42 (35 to 42) interacts with ATP; it reads GPNGAGKT.

It belongs to the ABC transporter superfamily. CcmA exporter (TC 3.A.1.107) family. In terms of assembly, the complex is composed of two ATP-binding proteins (CcmA) and two transmembrane proteins (CcmB).

It is found in the cell inner membrane. The enzyme catalyses heme b(in) + ATP + H2O = heme b(out) + ADP + phosphate + H(+). Part of the ABC transporter complex CcmAB involved in the biogenesis of c-type cytochromes; once thought to export heme, this seems not to be the case, but its exact role is uncertain. Responsible for energy coupling to the transport system. The protein is Cytochrome c biogenesis ATP-binding export protein CcmA of Nitrobacter winogradskyi (strain ATCC 25391 / DSM 10237 / CIP 104748 / NCIMB 11846 / Nb-255).